A 224-amino-acid polypeptide reads, in one-letter code: Synaptogyrin-2 (224 aa).

An N-acetylmethionine modification is found at methionine 1. Serine 3 bears the Phosphoserine mark. The 152-residue stretch at 20–171 (YVSQPQVVTR…LASLAYQRYK (152 aa)) folds into the MARVEL domain. The next 4 helical transmembrane spans lie at 30–50 (LVSMVLALIVFSCIFGEGYIN), 73–93 (AIGVLAFLASAFFLVVDAFFS), 105–125 (VIGDLLFSALWTFLWFVGFCF), and 147–167 (AAITFSFFSIFSWGVLASLAY).

It belongs to the synaptogyrin family. May be tyrosine phosphorylated by Src. Ubiquitously expressed with lower expression in brain (at protein level).

The protein resides in the cytoplasmic vesicle membrane. It is found in the cytoplasmic vesicle. The protein localises to the secretory vesicle. Its subcellular location is the synaptic vesicle membrane. May play a role in regulated exocytosis. In neuronal cells, modulates the localization of synaptophysin/SYP into synaptic-like microvesicles and may therefore play a role in the formation and/or the maturation of this vesicles. May also play a role in GLUT4 storage and transport to the plasma membrane. The sequence is that of Synaptogyrin-2 from Rattus norvegicus (Rat).